Consider the following 255-residue polypeptide: MNILPYEIHLLVIDYLYNDDLSIYFVNKYFFSMLKHSKIQNTIIKKIIKKGELGVIRYINKLFRVNDELVIGNKLFESSGINNYLLTACKYGHCKLVKYFVECGADIHYKTDYALQLACKYGYLEIVKYLVKKGANINTDDCYAVQLASREGHLKIVKYLVELGTNVRKDRDLAFRWSVENNHLSVTKYLVELGSDVRSEKNYAIKKSCEYGYFEMTQYLMNQGANFRVDNDYAVRFASKKWTFKYCRIFDIMWR.

ANK repeat units follow at residues 79–109, 110–139, 141–169, 171–199, and 201–229; these read SGIN…DIHY, KTDY…NINT, DCYA…NVRK, RDLA…DVRS, and KNYA…NFRV.

This is Putative ankyrin repeat protein R880 from Acanthamoeba polyphaga (Amoeba).